A 342-amino-acid chain; its full sequence is Type II restriction enzyme CviAII (342 aa).

The enzyme catalyses Endonucleolytic cleavage of DNA to give specific double-stranded fragments with terminal 5'-phosphates.. A P subtype restriction enzyme that recognizes the double-stranded sequence 5'-CATG-3' and cleaves after C-1. The protein is Type II restriction enzyme CviAII (CVIAIIR) of Chlorella (PBCV-1).